A 156-amino-acid polypeptide reads, in one-letter code: Arginine repressor (156 aa).

It belongs to the ArgR family.

The protein resides in the cytoplasm. It participates in amino-acid biosynthesis; L-arginine biosynthesis [regulation]. Functionally, regulates arginine biosynthesis genes. This chain is Arginine repressor, found in Enterobacter sp. (strain 638).